The primary structure comprises 434 residues: Protein maelstrom homolog (434 aa).

The segment at residues 4 to 73 (RKASRNAYYF…AQGKDPGPSE (70 aa)) is a DNA-binding region (HMG box). Positions 357–385 (SHFNSSNEEQRSNTPIGDYPSRAKISGQN) are disordered.

This sequence belongs to the maelstrom family. As to quaternary structure, interacts with SMARCB1, SIN3B and DDX4. Interacts with piRNA-associated proteins TDRD1, PIWIL1 and PIWIL2. Interacts with TEX19. As to expression, testis-specific. Expressed in various cancer cell lines, probably due to demethylation of its promoter.

It is found in the cytoplasm. The protein resides in the nucleus. Plays a central role during spermatogenesis by repressing transposable elements and preventing their mobilization, which is essential for the germline integrity. Acts via the piRNA metabolic process, which mediates the repression of transposable elements during meiosis by forming complexes composed of piRNAs and Piwi proteins and governs the methylation and subsequent repression of transposons. Its association with piP-bodies suggests a participation in the secondary piRNAs metabolic process. Required for the localization of germ-cell factors to the meiotic nuage. In Homo sapiens (Human), this protein is Protein maelstrom homolog (MAEL).